A 210-amino-acid polypeptide reads, in one-letter code: Cytochrome c biogenesis ATP-binding export protein CcmA (210 aa).

The 207-residue stretch at 3 to 209 (LTVTNLACAR…PADDPFAGVT (207 aa)) folds into the ABC transporter domain. An ATP-binding site is contributed by 35–42 (GPNGIGKT).

Belongs to the ABC transporter superfamily. CcmA exporter (TC 3.A.1.107) family. As to quaternary structure, the complex is composed of two ATP-binding proteins (CcmA) and two transmembrane proteins (CcmB).

The protein localises to the cell inner membrane. It catalyses the reaction heme b(in) + ATP + H2O = heme b(out) + ADP + phosphate + H(+). Functionally, part of the ABC transporter complex CcmAB involved in the biogenesis of c-type cytochromes; once thought to export heme, this seems not to be the case, but its exact role is uncertain. Responsible for energy coupling to the transport system. This chain is Cytochrome c biogenesis ATP-binding export protein CcmA, found in Cereibacter sphaeroides (strain ATCC 17023 / DSM 158 / JCM 6121 / CCUG 31486 / LMG 2827 / NBRC 12203 / NCIMB 8253 / ATH 2.4.1.) (Rhodobacter sphaeroides).